A 446-amino-acid polypeptide reads, in one-letter code: Exodeoxyribonuclease 7 large subunit (446 aa).

The protein belongs to the XseA family. Heterooligomer composed of large and small subunits.

The protein localises to the cytoplasm. It catalyses the reaction Exonucleolytic cleavage in either 5'- to 3'- or 3'- to 5'-direction to yield nucleoside 5'-phosphates.. In terms of biological role, bidirectionally degrades single-stranded DNA into large acid-insoluble oligonucleotides, which are then degraded further into small acid-soluble oligonucleotides. The sequence is that of Exodeoxyribonuclease 7 large subunit from Streptococcus pneumoniae (strain Taiwan19F-14).